The chain runs to 538 residues: Capsular polysaccharide biosynthesis protein RkpI (538 aa).

Transmembrane regions (helical) follow at residues 16–36 (LHDYPIALTLGCYLLSCAVIF), 70–90 (VIALVFAGFFAISWRPLYAAA), 114–134 (LVFSDIALVADVFKYKTIFYA), 139–159 (IVFWIVAFLYVFGVSALYMYF), 170–190 (LFWVLVMVGIAAGPWGLLFYG), and 212–232 (NTVRFGTFASVVFHFIIWLGV).

The protein resides in the cell membrane. The protein operates within capsule biogenesis; capsule polysaccharide biosynthesis. Its function is as follows. Involved in antigen K (capsular polysaccharide) biosynthesis. This Rhizobium meliloti (strain 1021) (Ensifer meliloti) protein is Capsular polysaccharide biosynthesis protein RkpI (rkpI).